The chain runs to 305 residues: tRNA-cytidine(32) 2-sulfurtransferase (305 aa).

Residues 1–20 (MTAVLPLPHPLADPAPRDPR) are disordered. Positions 59-64 (SGGKDS) match the PP-loop motif motif. [4Fe-4S] cluster contacts are provided by cysteine 134, cysteine 137, and cysteine 225. The span at 282–293 (DAPPDLAPDPGA) shows a compositional bias: low complexity. Residues 282-305 (DAPPDLAPDPGAWLTASDATHDSD) are disordered.

The protein belongs to the TtcA family. Homodimer. Mg(2+) is required as a cofactor. Requires [4Fe-4S] cluster as cofactor.

The protein resides in the cytoplasm. It carries out the reaction cytidine(32) in tRNA + S-sulfanyl-L-cysteinyl-[cysteine desulfurase] + AH2 + ATP = 2-thiocytidine(32) in tRNA + L-cysteinyl-[cysteine desulfurase] + A + AMP + diphosphate + H(+). It functions in the pathway tRNA modification. Its function is as follows. Catalyzes the ATP-dependent 2-thiolation of cytidine in position 32 of tRNA, to form 2-thiocytidine (s(2)C32). The sulfur atoms are provided by the cysteine/cysteine desulfurase (IscS) system. The sequence is that of tRNA-cytidine(32) 2-sulfurtransferase from Xanthomonas oryzae pv. oryzae (strain MAFF 311018).